We begin with the raw amino-acid sequence, 158 residues long: Small ribosomal subunit protein uS15 (158 aa).

Over residues 1 to 10 (MARMHTRRRG) the composition is skewed to basic residues. The segment at 1–66 (MARMHTRRRG…EGVKGTPIPD (66 aa)) is disordered. Positions 21–32 (DPPEWSDIDADA) are enriched in acidic residues. Basic and acidic residues predominate over residues 33-45 (IEERVVELAEQGH).

Belongs to the universal ribosomal protein uS15 family. As to quaternary structure, part of the 30S ribosomal subunit.

The protein is Small ribosomal subunit protein uS15 of Haloquadratum walsbyi (strain DSM 16790 / HBSQ001).